Reading from the N-terminus, the 209-residue chain is Thiamine-phosphate synthase 1 (209 aa).

Residues 39 to 43 (QFREK) and Asn74 contribute to the 4-amino-2-methyl-5-(diphosphooxymethyl)pyrimidine site. 2 residues coordinate Mg(2+): Asp75 and Asp94. Ser112 is a binding site for 4-amino-2-methyl-5-(diphosphooxymethyl)pyrimidine. 138–140 (TQS) serves as a coordination point for 2-[(2R,5Z)-2-carboxy-4-methylthiazol-5(2H)-ylidene]ethyl phosphate. Residue Lys141 participates in 4-amino-2-methyl-5-(diphosphooxymethyl)pyrimidine binding. 2-[(2R,5Z)-2-carboxy-4-methylthiazol-5(2H)-ylidene]ethyl phosphate is bound by residues Gly170 and 190-191 (IS).

It belongs to the thiamine-phosphate synthase family. Mg(2+) serves as cofactor.

The catalysed reaction is 2-[(2R,5Z)-2-carboxy-4-methylthiazol-5(2H)-ylidene]ethyl phosphate + 4-amino-2-methyl-5-(diphosphooxymethyl)pyrimidine + 2 H(+) = thiamine phosphate + CO2 + diphosphate. It catalyses the reaction 2-(2-carboxy-4-methylthiazol-5-yl)ethyl phosphate + 4-amino-2-methyl-5-(diphosphooxymethyl)pyrimidine + 2 H(+) = thiamine phosphate + CO2 + diphosphate. It carries out the reaction 4-methyl-5-(2-phosphooxyethyl)-thiazole + 4-amino-2-methyl-5-(diphosphooxymethyl)pyrimidine + H(+) = thiamine phosphate + diphosphate. Its pathway is cofactor biosynthesis; thiamine diphosphate biosynthesis; thiamine phosphate from 4-amino-2-methyl-5-diphosphomethylpyrimidine and 4-methyl-5-(2-phosphoethyl)-thiazole: step 1/1. Condenses 4-methyl-5-(beta-hydroxyethyl)thiazole monophosphate (THZ-P) and 2-methyl-4-amino-5-hydroxymethyl pyrimidine pyrophosphate (HMP-PP) to form thiamine monophosphate (TMP). The protein is Thiamine-phosphate synthase 1 of Streptococcus pneumoniae serotype 4 (strain ATCC BAA-334 / TIGR4).